Reading from the N-terminus, the 236-residue chain is Phosphoribosylaminoimidazole-succinocarboxamide synthase (236 aa).

Belongs to the SAICAR synthetase family.

The enzyme catalyses 5-amino-1-(5-phospho-D-ribosyl)imidazole-4-carboxylate + L-aspartate + ATP = (2S)-2-[5-amino-1-(5-phospho-beta-D-ribosyl)imidazole-4-carboxamido]succinate + ADP + phosphate + 2 H(+). The protein operates within purine metabolism; IMP biosynthesis via de novo pathway; 5-amino-1-(5-phospho-D-ribosyl)imidazole-4-carboxamide from 5-amino-1-(5-phospho-D-ribosyl)imidazole-4-carboxylate: step 1/2. The polypeptide is Phosphoribosylaminoimidazole-succinocarboxamide synthase (purC) (Lactococcus lactis subsp. cremoris (Streptococcus cremoris)).